The sequence spans 521 residues: Lysine--tRNA ligase (521 aa).

The 'HIGH' region signature appears at Pro32–Asn40. Residues Lys280 to Ser284 carry the 'KMSKS' region motif.

It belongs to the class-I aminoacyl-tRNA synthetase family.

Its subcellular location is the cytoplasm. It catalyses the reaction tRNA(Lys) + L-lysine + ATP = L-lysyl-tRNA(Lys) + AMP + diphosphate. In Borreliella burgdorferi (strain ATCC 35210 / DSM 4680 / CIP 102532 / B31) (Borrelia burgdorferi), this protein is Lysine--tRNA ligase (lysS).